The following is a 318-amino-acid chain: Olfactory receptor 56A1 (318 aa).

Residues 1 to 32 (MIQPMASPSNSSTVPVSEFLLICFPNFQSWQH) lie on the Extracellular side of the membrane. Asn-10 carries N-linked (GlcNAc...) asparagine glycosylation. The chain crosses the membrane as a helical span at residues 33 to 53 (WLSLPLSLLFLLAMGANTTLL). Topologically, residues 54–61 (ITIQLEAS) are cytoplasmic. Residues 62–82 (LHQPLYYLLSLLSLLDIVLCL) traverse the membrane as a helical segment. Residues 83-106 (TVIPKVLAIFWYDLRSISFPACFL) are Extracellular-facing. Residues Cys-104 and Cys-196 are joined by a disulfide bond. A helical transmembrane segment spans residues 107–127 (QMFIMNSFLPMESCTFMVMAY). Residues 128–146 (DRYVAICHPLRYPSIITNQ) are Cytoplasmic-facing. Residues 147 to 167 (FVAKASVFIVVRNALLTAPIP) traverse the membrane as a helical segment. The Extracellular portion of the chain corresponds to 168–203 (ILTSLLHYCGENVIENCICANLSVSRLSCDNFTLNR). Asn-188 and Asn-198 each carry an N-linked (GlcNAc...) asparagine glycan. A helical membrane pass occupies residues 204-224 (IYQFVAGWTLLGSDLFLIFLS). The Cytoplasmic segment spans residues 225–244 (YTFILRAVLRFKAEGAAVKA). A helical membrane pass occupies residues 245 to 265 (LSTCGSHFILILFFSTILLVV). Residues 266–280 (VLTNVARKKVPMDIL) are Extracellular-facing. The helical transmembrane segment at 281–301 (ILLNVLHHLIPPALNPIVYGV) threads the bilayer. Residues 302-318 (RTKEIKQGIQKLLQRGR) lie on the Cytoplasmic side of the membrane.

This sequence belongs to the G-protein coupled receptor 1 family.

The protein localises to the cell membrane. Functionally, odorant receptor. This is Olfactory receptor 56A1 (OR56A1) from Homo sapiens (Human).